The following is a 184-amino-acid chain: Prolyl-tRNA synthetase associated domain-containing protein 1 (184 aa).

Belongs to the PRORSD1 family.

This chain is Prolyl-tRNA synthetase associated domain-containing protein 1 (Prorsd1), found in Danio rerio (Zebrafish).